The sequence spans 64 residues: Large ribosomal subunit protein bL35 (64 aa).

The protein belongs to the bacterial ribosomal protein bL35 family.

This Coxiella burnetii (strain RSA 493 / Nine Mile phase I) protein is Large ribosomal subunit protein bL35.